Reading from the N-terminus, the 133-residue chain is Holo-[acyl-carrier-protein] synthase (133 aa).

Residues D8 and E57 each contribute to the Mg(2+) site.

This sequence belongs to the P-Pant transferase superfamily. AcpS family. Mg(2+) is required as a cofactor.

The protein localises to the cytoplasm. The enzyme catalyses apo-[ACP] + CoA = holo-[ACP] + adenosine 3',5'-bisphosphate + H(+). Its function is as follows. Transfers the 4'-phosphopantetheine moiety from coenzyme A to a Ser of acyl-carrier-protein. This Caulobacter vibrioides (strain ATCC 19089 / CIP 103742 / CB 15) (Caulobacter crescentus) protein is Holo-[acyl-carrier-protein] synthase.